The chain runs to 366 residues: Septin-1 (366 aa).

In terms of domain architecture, Septin-type G spans 22–295 (KGFDFTLMVA…EGYRARCLQS (274 aa)). The segment at 32 to 39 (GESGLGKS) is G1 motif. GTP is bound by residues 32-39 (GESGLGKS), Thr66, Gly92, and 171-179 (KADALMPRE). Residues 89 to 92 (DTPG) form a G3 motif region. A G4 motif region spans residues 170–173 (GKAD). The residue at position 206 (Ser206) is a Phosphoserine. GTP-binding residues include Gly229 and Arg244. Residue Ser247 is modified to Phosphoserine. Phosphothreonine is present on Thr250. Ser306 and Ser314 each carry phosphoserine; by AURKB. The interval 347-366 (EKMQAQMQQSQAQGEQSDVL) is disordered. The span at 349–366 (MQAQMQQSQAQGEQSDVL) shows a compositional bias: low complexity.

It belongs to the TRAFAC class TrmE-Era-EngA-EngB-Septin-like GTPase superfamily. Septin GTPase family. In terms of assembly, septins polymerize into heterooligomeric protein complexes that form filaments, and can associate with cellular membranes, actin filaments and microtubules. GTPase activity is required for filament formation. Interacts with AURKB.

Its subcellular location is the cytoplasm. It localises to the cytoskeleton. The protein resides in the microtubule organizing center. The protein localises to the centrosome. It is found in the midbody. Functionally, filament-forming cytoskeletal GTPase. May play a role in cytokinesis (Potential). This chain is Septin-1, found in Mus musculus (Mouse).